The sequence spans 293 residues: Nucleotide-binding protein DvMF_0424 (293 aa).

ATP is bound at residue 13 to 20 (GLSGAGKS). 65–68 (DLRE) is a binding site for GTP.

Belongs to the RapZ-like family.

Functionally, displays ATPase and GTPase activities. The polypeptide is Nucleotide-binding protein DvMF_0424 (Nitratidesulfovibrio vulgaris (strain DSM 19637 / Miyazaki F) (Desulfovibrio vulgaris)).